The chain runs to 166 residues: NAD(P)H-quinone oxidoreductase subunit I, chloroplastic (166 aa).

4Fe-4S ferredoxin-type domains follow at residues Gly-55–Lys-84 and Leu-95–Glu-124. [4Fe-4S] cluster-binding residues include Cys-64, Cys-67, Cys-70, Cys-74, Cys-104, Cys-107, Cys-110, and Cys-114.

This sequence belongs to the complex I 23 kDa subunit family. As to quaternary structure, NDH is composed of at least 16 different subunits, 5 of which are encoded in the nucleus. [4Fe-4S] cluster is required as a cofactor.

The protein localises to the plastid. It is found in the chloroplast thylakoid membrane. The enzyme catalyses a plastoquinone + NADH + (n+1) H(+)(in) = a plastoquinol + NAD(+) + n H(+)(out). It carries out the reaction a plastoquinone + NADPH + (n+1) H(+)(in) = a plastoquinol + NADP(+) + n H(+)(out). Functionally, NDH shuttles electrons from NAD(P)H:plastoquinone, via FMN and iron-sulfur (Fe-S) centers, to quinones in the photosynthetic chain and possibly in a chloroplast respiratory chain. The immediate electron acceptor for the enzyme in this species is believed to be plastoquinone. Couples the redox reaction to proton translocation, and thus conserves the redox energy in a proton gradient. This chain is NAD(P)H-quinone oxidoreductase subunit I, chloroplastic, found in Ambrosia trifida (Giant ragweed).